The chain runs to 155 residues: SsrA-binding protein (155 aa).

The protein belongs to the SmpB family.

The protein resides in the cytoplasm. Functionally, required for rescue of stalled ribosomes mediated by trans-translation. Binds to transfer-messenger RNA (tmRNA), required for stable association of tmRNA with ribosomes. tmRNA and SmpB together mimic tRNA shape, replacing the anticodon stem-loop with SmpB. tmRNA is encoded by the ssrA gene; the 2 termini fold to resemble tRNA(Ala) and it encodes a 'tag peptide', a short internal open reading frame. During trans-translation Ala-aminoacylated tmRNA acts like a tRNA, entering the A-site of stalled ribosomes, displacing the stalled mRNA. The ribosome then switches to translate the ORF on the tmRNA; the nascent peptide is terminated with the 'tag peptide' encoded by the tmRNA and targeted for degradation. The ribosome is freed to recommence translation, which seems to be the essential function of trans-translation. This is SsrA-binding protein from Streptococcus sanguinis (strain SK36).